Consider the following 344-residue polypeptide: Envelope glycoprotein M (344 aa).

Residues 1–12 (MASSRVDTINLR) lie on the Intravirion side of the membrane. Residues 13-33 (IWLVSIICAALSFINVTVHLI) form a helical membrane-spanning segment. Over 34-76 (AINFPNLGFPCAYFEINDLKAVNLSANNEIYQMTHQLYINPVQ) the chain is Virion surface. The helical transmembrane segment at 77–97 (IICYVLIMAILFLLIIIYYIV) threads the bilayer. The Intravirion segment spans residues 98–125 (CCAKVFSSNKTSNVNQTTRDITWMGDTS). Residues 126–146 (SCFQFILIMDTFQLFVTALSF) traverse the membrane as a helical segment. Position 147 (R147) is a topological domain, virion surface. A helical transmembrane segment spans residues 148 to 168 (LVALGAFAYSIFFVCFTTFNV). Topologically, residues 169–203 (TLITQFQSADKSFFAFQKIHPNLKGTVQFKTVVIN) are intravirion. A helical transmembrane segment spans residues 204–224 (LSELMLGYSTMFLGITTCLGV). Residues 225-238 (GNSIYIRSITVAFS) are Virion surface-facing. Residues 239–259 (SINTFLVMACIYSIVIEAVLV) form a helical membrane-spanning segment. The Intravirion portion of the chain corresponds to 260–263 (RYVK). A helical transmembrane segment spans residues 264–284 (PLFGYYVGMFCGAVGLSFPIL). The Virion surface portion of the chain corresponds to 285 to 293 (QYETFFESE). Residues 294-314 (WSTGLIINLSVVAIISIGFII) traverse the membrane as a helical segment. At 315–344 (CRLVRYLVKKKRRYKQLLNAESSSLMDENE) the chain is on the intravirion side.

Belongs to the herpesviridae glycoprotein M family. In terms of assembly, interacts (via N-terminus) with gN (via N-terminus). The gM-gN heterodimer forms the gCII complex.

Its subcellular location is the virion membrane. The protein localises to the host Golgi apparatus. It localises to the host trans-Golgi network. The protein resides in the host endosome membrane. It is found in the host nucleus inner membrane. Envelope glycoprotein important for virion assembly and egress. Plays a role in the correct incorporation of gH-gL into virion membrane. Directs the glycoprotein N (gN) to the host trans-Golgi network. This is Envelope glycoprotein M from Homo sapiens (Human).